We begin with the raw amino-acid sequence, 161 residues long: Protein PLASTID TRANSCRIPTIONALLY ACTIVE 7 (161 aa).

Residues 1-32 constitute a chloroplast transit peptide; that stretch reads MASFTCSSPSSILPIIDTRSGNLRCTFQSQVS.

In terms of assembly, component of the transcriptionally active chromosome (TAC) complexes. Interacts with FLN1, PTAC10, PTAC12/HMR/PAP5 and PTAC14. Binds to SL1/MTERF3. Mostly expressed in leaves, flowers and seedlings, and, to a lower extent, in roots and stems.

The protein localises to the plastid. The protein resides in the chloroplast. Essential for chloroplast development, especially for thylakoid formation. Involved in plastid gene expression, probably by maintaining plastid-encoded RNA polymerase (PEP) activity. The chain is Protein PLASTID TRANSCRIPTIONALLY ACTIVE 7 from Arabidopsis thaliana (Mouse-ear cress).